A 308-amino-acid chain; its full sequence is Ribonuclease HIII (308 aa).

The region spanning 92–308 (DNHIGSDEAG…ANTQKAQKLL (217 aa)) is the RNase H type-2 domain. Residues Asp98, Glu99, and Asp204 each contribute to the a divalent metal cation site.

This sequence belongs to the RNase HII family. RnhC subfamily. Requires Mn(2+) as cofactor. Mg(2+) serves as cofactor.

It is found in the cytoplasm. It catalyses the reaction Endonucleolytic cleavage to 5'-phosphomonoester.. Endonuclease that specifically degrades the RNA of RNA-DNA hybrids. This is Ribonuclease HIII from Oceanobacillus iheyensis (strain DSM 14371 / CIP 107618 / JCM 11309 / KCTC 3954 / HTE831).